Here is a 419-residue protein sequence, read N- to C-terminus: Transcription termination factor Rho (419 aa).

A Rho RNA-BD domain is found at 48-123; it reads EISGDGVLEI…LKVDSINFDR (76 aa). 3 RNA-binding regions span residues 61-66, 78-80, and 108-110; these read GFGFLR, DIY, and ERY. ATP is bound by residues 169–174, 181–186, and Arg-212; these read GKGQRG and KAGKTI. Positions 284–288 are RNA-binding 2; sequence VLTGG.

This sequence belongs to the Rho family. In terms of assembly, homohexamer. The homohexamer assembles into an open ring structure.

Facilitates transcription termination by a mechanism that involves Rho binding to the nascent RNA, activation of Rho's RNA-dependent ATPase activity, and release of the mRNA from the DNA template. The chain is Transcription termination factor Rho from Pseudomonas aeruginosa (strain ATCC 15692 / DSM 22644 / CIP 104116 / JCM 14847 / LMG 12228 / 1C / PRS 101 / PAO1).